A 481-amino-acid polypeptide reads, in one-letter code: ATP synthase subunit beta (481 aa).

167–174 lines the ATP pocket; it reads GGAGVGKT.

This sequence belongs to the ATPase alpha/beta chains family. In terms of assembly, F-type ATPases have 2 components, CF(1) - the catalytic core - and CF(0) - the membrane proton channel. CF(1) has five subunits: alpha(3), beta(3), gamma(1), delta(1), epsilon(1). CF(0) has three main subunits: a(1), b(2) and c(9-12). The alpha and beta chains form an alternating ring which encloses part of the gamma chain. CF(1) is attached to CF(0) by a central stalk formed by the gamma and epsilon chains, while a peripheral stalk is formed by the delta and b chains.

Its subcellular location is the cell membrane. It catalyses the reaction ATP + H2O + 4 H(+)(in) = ADP + phosphate + 5 H(+)(out). In terms of biological role, produces ATP from ADP in the presence of a proton gradient across the membrane. The catalytic sites are hosted primarily by the beta subunits. The protein is ATP synthase subunit beta of Corynebacterium diphtheriae (strain ATCC 700971 / NCTC 13129 / Biotype gravis).